A 410-amino-acid chain; its full sequence is Putative nickel insertion protein (410 aa).

The protein belongs to the LarC family.

This Cyanothece sp. (strain PCC 7425 / ATCC 29141) protein is Putative nickel insertion protein.